Reading from the N-terminus, the 251-residue chain is Hydroxyacylglutathione hydrolase (251 aa).

Positions 53, 55, 57, 58, 110, 127, and 165 each coordinate Zn(2+).

The protein belongs to the metallo-beta-lactamase superfamily. Glyoxalase II family. As to quaternary structure, monomer. Requires Zn(2+) as cofactor.

It carries out the reaction an S-(2-hydroxyacyl)glutathione + H2O = a 2-hydroxy carboxylate + glutathione + H(+). The protein operates within secondary metabolite metabolism; methylglyoxal degradation; (R)-lactate from methylglyoxal: step 2/2. Its function is as follows. Thiolesterase that catalyzes the hydrolysis of S-D-lactoyl-glutathione to form glutathione and D-lactic acid. The polypeptide is Hydroxyacylglutathione hydrolase (Escherichia coli O81 (strain ED1a)).